The sequence spans 327 residues: DNA-directed RNA polymerase subunit alpha (327 aa).

An alpha N-terminal domain (alpha-NTD) region spans residues 1–233; the sequence is MQGSVTEFLK…EQLEAFVDLR (233 aa). The interval 247–327 is alpha C-terminal domain (alpha-CTD); sequence FDPVLLRPVD…NWPPLGFIDK (81 aa).

The protein belongs to the RNA polymerase alpha chain family. As to quaternary structure, homodimer. The RNAP catalytic core consists of 2 alpha, 1 beta, 1 beta' and 1 omega subunit. When a sigma factor is associated with the core the holoenzyme is formed, which can initiate transcription.

It catalyses the reaction RNA(n) + a ribonucleoside 5'-triphosphate = RNA(n+1) + diphosphate. Functionally, DNA-dependent RNA polymerase catalyzes the transcription of DNA into RNA using the four ribonucleoside triphosphates as substrates. The chain is DNA-directed RNA polymerase subunit alpha from Baumannia cicadellinicola subsp. Homalodisca coagulata.